A 286-amino-acid polypeptide reads, in one-letter code: 3-methyl-2-oxobutanoate hydroxymethyltransferase (286 aa).

Positions 67 and 106 each coordinate Mg(2+). Residues 67–68 (DS), Asp-106, and Lys-136 contribute to the 3-methyl-2-oxobutanoate site. Glu-138 is a binding site for Mg(2+). Catalysis depends on Glu-204, which acts as the Proton acceptor.

It belongs to the PanB family. Homodecamer; pentamer of dimers. Mg(2+) is required as a cofactor.

Its subcellular location is the cytoplasm. It catalyses the reaction 3-methyl-2-oxobutanoate + (6R)-5,10-methylene-5,6,7,8-tetrahydrofolate + H2O = 2-dehydropantoate + (6S)-5,6,7,8-tetrahydrofolate. The protein operates within cofactor biosynthesis; (R)-pantothenate biosynthesis; (R)-pantoate from 3-methyl-2-oxobutanoate: step 1/2. Its function is as follows. Catalyzes the reversible reaction in which hydroxymethyl group from 5,10-methylenetetrahydrofolate is transferred onto alpha-ketoisovalerate to form ketopantoate. This is 3-methyl-2-oxobutanoate hydroxymethyltransferase from Mycobacterium leprae (strain TN).